We begin with the raw amino-acid sequence, 229 residues long: Potassium/proton antiporter CemA (229 aa).

Helical transmembrane passes span 7 to 27 (LASL…SISF) and 106 to 126 (IISH…YFIL).

The protein belongs to the CemA family.

The protein localises to the plastid. Its subcellular location is the chloroplast inner membrane. It catalyses the reaction K(+)(in) + H(+)(out) = K(+)(out) + H(+)(in). Functionally, contributes to K(+)/H(+) antiport activity by supporting proton efflux to control proton extrusion and homeostasis in chloroplasts in a light-dependent manner to modulate photosynthesis. Prevents excessive induction of non-photochemical quenching (NPQ) under continuous-light conditions. Indirectly promotes efficient inorganic carbon uptake into chloroplasts. This chain is Potassium/proton antiporter CemA, found in Cycas taitungensis (Prince sago).